The following is a 942-amino-acid chain: Alanine--tRNA ligase (942 aa).

Residues histidine 586, histidine 590, cysteine 695, and histidine 699 each coordinate Zn(2+).

It belongs to the class-II aminoacyl-tRNA synthetase family. Requires Zn(2+) as cofactor.

It is found in the cytoplasm. It catalyses the reaction tRNA(Ala) + L-alanine + ATP = L-alanyl-tRNA(Ala) + AMP + diphosphate. In terms of biological role, catalyzes the attachment of alanine to tRNA(Ala) in a two-step reaction: alanine is first activated by ATP to form Ala-AMP and then transferred to the acceptor end of tRNA(Ala). Also edits incorrectly charged Ser-tRNA(Ala) and Gly-tRNA(Ala) via its editing domain. This is Alanine--tRNA ligase from Akkermansia muciniphila (strain ATCC BAA-835 / DSM 22959 / JCM 33894 / BCRC 81048 / CCUG 64013 / CIP 107961 / Muc).